A 661-amino-acid chain; its full sequence is Meiotic coiled-coil protein 1 (661 aa).

Coiled-coil stretches lie at residues 38–78 (LDAL…IIEE), 100–121 (RAIYNTKKNEAKNMYKEIERLS), 143–184 (DIKL…LSIK), 304–320 (ELIQSMKQEIGNLEVDL), and 360–387 (LKRLQKDFQLLKAKLICALREWEEDNEK). Disordered stretches follow at residues 410-446 (QNQENISSNDNSKSSPESSPPARKTTGKIENKKLRNI), 467-562 (LIDR…TPAS), and 573-592 (LSRTPPKGEFTNSLDDTPTQ). Low complexity predominate over residues 414–430 (NISSNDNSKSSPESSPP). The span at 436 to 445 (GKIENKKLRN) shows a compositional bias: basic and acidic residues. 3 stretches are compositionally biased toward polar residues: residues 472 to 481 (VNQSPDTRSV), 548 to 562 (HNSVKLTGSSTTPAS), and 582 to 592 (FTNSLDDTPTQ).

The sequence is that of Meiotic coiled-coil protein 1 (mcp1) from Schizosaccharomyces pombe (strain 972 / ATCC 24843) (Fission yeast).